Reading from the N-terminus, the 343-residue chain is Low conductance mechanosensitive channel YnaI (343 aa).

Residues 1–9 (MIAELFTNN) lie on the Periplasmic side of the membrane. The helical transmembrane segment at 10–30 (ALNLVIIFGSCAALILMSFWF) threads the bilayer. The Cytoplasmic portion of the chain corresponds to 31–40 (RRGNRKRKGF). The chain crosses the membrane as a helical span at residues 41–61 (LFHAVQFLIYTIIISAVGSII). The Periplasmic segment spans residues 62–77 (NYVIENYKLKFITPGV). Residues 78-98 (IDFICTSLIAVILTIKLFLLI) form a helical membrane-spanning segment. The Cytoplasmic portion of the chain corresponds to 99–125 (NQFEKQQIKKGRDITSARIMSRIIKIT). A helical transmembrane segment spans residues 126 to 146 (IIVVLVLLYGEHFGMSLSGLL). T147 is a topological domain (periplasmic). Residues 148–168 (FGGIGGLAVGMAGKDILSNFF) traverse the membrane as a helical segment. The Cytoplasmic segment spans residues 169-343 (SGIMLYFDRP…DNITPPEQGR (175 aa)).

The protein belongs to the MscS (TC 1.A.23) family. Homoheptamer.

It localises to the cell inner membrane. Its function is as follows. Mechanosensitive channel that protects cells against hypoosmotic stress when highly overexpressed. In Escherichia coli (strain K12), this protein is Low conductance mechanosensitive channel YnaI (ynaI).